The primary structure comprises 336 residues: tRNA-cytidine(32) 2-sulfurtransferase (336 aa).

Low complexity predominate over residues 11–23 (TAAAPAGTGEATP). Positions 11 to 31 (TAAAPAGTGEATPVHARARSP) are disordered. The short motif at 75–80 (SGGKDS) is the PP-loop motif element. [4Fe-4S] cluster-binding residues include Cys150, Cys153, and Cys241.

Belongs to the TtcA family. Homodimer. It depends on Mg(2+) as a cofactor. The cofactor is [4Fe-4S] cluster.

The protein localises to the cytoplasm. It catalyses the reaction cytidine(32) in tRNA + S-sulfanyl-L-cysteinyl-[cysteine desulfurase] + AH2 + ATP = 2-thiocytidine(32) in tRNA + L-cysteinyl-[cysteine desulfurase] + A + AMP + diphosphate + H(+). It participates in tRNA modification. In terms of biological role, catalyzes the ATP-dependent 2-thiolation of cytidine in position 32 of tRNA, to form 2-thiocytidine (s(2)C32). The sulfur atoms are provided by the cysteine/cysteine desulfurase (IscS) system. This Paraburkholderia xenovorans (strain LB400) protein is tRNA-cytidine(32) 2-sulfurtransferase.